Reading from the N-terminus, the 351-residue chain is Foldase protein PrsA 1 (351 aa).

The signal sequence occupies residues 1–22 (MKNSNKLIASVVTLASVMALAA). The N-palmitoyl cysteine moiety is linked to residue Cys23. Cys23 carries the S-diacylglycerol cysteine lipid modification. Residues 145-240 (TPTMAVEMIT…KKFYIVKVTK (96 aa)) enclose the PpiC domain. Low complexity-rich tracts occupy residues 303 to 317 (KTKA…SESS) and 326 to 351 (ESEQ…PAAQ). The disordered stretch occupies residues 303 to 351 (KTKAASESSTTSESSKAAEENPSESEQTQTSSAEEPTETEAQTQEPAAQ).

It belongs to the PrsA family.

Its subcellular location is the cell membrane. It carries out the reaction [protein]-peptidylproline (omega=180) = [protein]-peptidylproline (omega=0). Functionally, plays a major role in protein secretion by helping the post-translocational extracellular folding of several secreted proteins. The sequence is that of Foldase protein PrsA 1 (prsA1) from Streptococcus pyogenes serotype M18 (strain MGAS8232).